The chain runs to 372 residues: Alanine racemase (372 aa).

Lys48 functions as the Proton acceptor; specific for D-alanine in the catalytic mechanism. Lys48 carries the post-translational modification N6-(pyridoxal phosphate)lysine. Residue Arg143 coordinates substrate. Tyr268 acts as the Proton acceptor; specific for L-alanine in catalysis. Met316 is a binding site for substrate.

The protein belongs to the alanine racemase family. Pyridoxal 5'-phosphate serves as cofactor.

The catalysed reaction is L-alanine = D-alanine. It participates in amino-acid biosynthesis; D-alanine biosynthesis; D-alanine from L-alanine: step 1/1. Its function is as follows. Catalyzes the interconversion of L-alanine and D-alanine. May also act on other amino acids. The chain is Alanine racemase (alr) from Vibrio vulnificus (strain YJ016).